The chain runs to 134 residues: Protein Turandot E (134 aa).

The N-terminal stretch at 1–38 (MSYTRTVHSSTSILKMNSALQISCLLVVLGCLLGSGHC) is a signal peptide.

It belongs to the Turandot family.

The protein localises to the secreted. A humoral factor that may play a role in stress tolerance. This Drosophila simulans (Fruit fly) protein is Protein Turandot E.